A 301-amino-acid chain; its full sequence is Acetylglutamate kinase (301 aa).

Residues 72 to 73, R94, and N199 each bind substrate; that span reads GG.

Belongs to the acetylglutamate kinase family. ArgB subfamily.

Its subcellular location is the cytoplasm. It carries out the reaction N-acetyl-L-glutamate + ATP = N-acetyl-L-glutamyl 5-phosphate + ADP. The protein operates within amino-acid biosynthesis; L-arginine biosynthesis; N(2)-acetyl-L-ornithine from L-glutamate: step 2/4. Functionally, catalyzes the ATP-dependent phosphorylation of N-acetyl-L-glutamate. The polypeptide is Acetylglutamate kinase (Bartonella quintana (strain Toulouse) (Rochalimaea quintana)).